Here is a 61-residue protein sequence, read N- to C-terminus: Small ribosomal subunit protein uS14 (61 aa).

Residues cysteine 24, cysteine 27, cysteine 40, and cysteine 43 each coordinate Zn(2+).

Belongs to the universal ribosomal protein uS14 family. Zinc-binding uS14 subfamily. Part of the 30S ribosomal subunit. Contacts proteins S3 and S10. It depends on Zn(2+) as a cofactor.

In terms of biological role, binds 16S rRNA, required for the assembly of 30S particles and may also be responsible for determining the conformation of the 16S rRNA at the A site. This is Small ribosomal subunit protein uS14 from Geobacillus thermodenitrificans (strain NG80-2).